A 213-amino-acid chain; its full sequence is Thiamine-phosphate synthase (213 aa).

4-amino-2-methyl-5-(diphosphooxymethyl)pyrimidine-binding positions include 43–47 (QLRDK) and Asn74. Mg(2+) contacts are provided by Asp75 and Asp94. Residue Ser113 participates in 4-amino-2-methyl-5-(diphosphooxymethyl)pyrimidine binding. 142–144 (TAT) lines the 2-[(2R,5Z)-2-carboxy-4-methylthiazol-5(2H)-ylidene]ethyl phosphate pocket. 4-amino-2-methyl-5-(diphosphooxymethyl)pyrimidine is bound at residue Lys145. 2-[(2R,5Z)-2-carboxy-4-methylthiazol-5(2H)-ylidene]ethyl phosphate contacts are provided by residues Gly173 and 193–194 (VS).

Belongs to the thiamine-phosphate synthase family. It depends on Mg(2+) as a cofactor.

The catalysed reaction is 2-[(2R,5Z)-2-carboxy-4-methylthiazol-5(2H)-ylidene]ethyl phosphate + 4-amino-2-methyl-5-(diphosphooxymethyl)pyrimidine + 2 H(+) = thiamine phosphate + CO2 + diphosphate. The enzyme catalyses 2-(2-carboxy-4-methylthiazol-5-yl)ethyl phosphate + 4-amino-2-methyl-5-(diphosphooxymethyl)pyrimidine + 2 H(+) = thiamine phosphate + CO2 + diphosphate. It carries out the reaction 4-methyl-5-(2-phosphooxyethyl)-thiazole + 4-amino-2-methyl-5-(diphosphooxymethyl)pyrimidine + H(+) = thiamine phosphate + diphosphate. The protein operates within cofactor biosynthesis; thiamine diphosphate biosynthesis; thiamine phosphate from 4-amino-2-methyl-5-diphosphomethylpyrimidine and 4-methyl-5-(2-phosphoethyl)-thiazole: step 1/1. In terms of biological role, condenses 4-methyl-5-(beta-hydroxyethyl)thiazole monophosphate (THZ-P) and 2-methyl-4-amino-5-hydroxymethyl pyrimidine pyrophosphate (HMP-PP) to form thiamine monophosphate (TMP). The chain is Thiamine-phosphate synthase from Psychrobacter sp. (strain PRwf-1).